We begin with the raw amino-acid sequence, 143 residues long: UPF0299 membrane protein CGSHiEE_04225 (143 aa).

4 consecutive transmembrane segments (helical) span residues 1–21 (MIQK…MLSL), 33–52 (VPGS…TRVI), 60–80 (GASL…VGII), and 92–112 (ILLV…GFLG).

Belongs to the UPF0299 family.

It is found in the cell inner membrane. This chain is UPF0299 membrane protein CGSHiEE_04225, found in Haemophilus influenzae (strain PittEE).